A 524-amino-acid polypeptide reads, in one-letter code: Leucine-rich repeat-containing protein 1 (524 aa).

LRR repeat units follow at residues 11–34 (NRHV…IYRY), 35–58 (ARSL…FFQL), 60–81 (KLRK…IANF), 83–105 (QLVE…SFCK), 107–126 (LQVA…SFPE), 127–149 (LQNL…NIGN), 150–172 (LYNL…SLTQ), 173–196 (LRRL…IGAL), 198–218 (HLKD…EIGN), 219–242 (LKNL…ISGL), 244–264 (SLTD…GIGK), 265–288 (LKKL…VGEC), 290–310 (SLTE…SIGK), 311–334 (LKKL…IGGC), 336–356 (SLTV…EVSQ), 357–380 (ATEL…LTAL), and 382–405 (LKAL…TDYT). Thr-480 is subject to Phosphothreonine. Positions 484–512 (GELKHMKKTVENLRNDMNAAKGLDSNKNE) form a coiled coil.

Interacts with DLG1 and DLG4. May form a complex with DLG1 and ERBIN, where interaction between LRRC1 and ERBIN is indirect. Expressed strongly in testis and placenta, followed by heart, lung, kidney, thyroid, trachea, colon, prostate and pancreas.

The protein resides in the cytoplasm. The protein localises to the membrane. This chain is Leucine-rich repeat-containing protein 1 (LRRC1), found in Homo sapiens (Human).